Reading from the N-terminus, the 281-residue chain is MLRVAVPNKGTLAEKAAQMLREAGYRQRTDPKDLVCRDDANNIEFFYLRPKDIATYVGSGDLDVGITGRDLLVDSGAPATEVVDLGFGQATFRFAARPEDIDTAQDLDGRRVATAYPGLVERHLAELGVKADVIRLDGAVENAIRLGLADVVADVVETGATLRQAGLVVFGEPLLRSSAVLVCRSAAQPHPQGELLLRRLHSVLVARRYVMLTYDVPADLLARASSLTPGIESPTVSRLHREGWVAVQAMVLRDDVHRIMDELYQVGARAILVTNIQACRL.

This sequence belongs to the ATP phosphoribosyltransferase family. Long subfamily. Mg(2+) is required as a cofactor.

It is found in the cytoplasm. It catalyses the reaction 1-(5-phospho-beta-D-ribosyl)-ATP + diphosphate = 5-phospho-alpha-D-ribose 1-diphosphate + ATP. The protein operates within amino-acid biosynthesis; L-histidine biosynthesis; L-histidine from 5-phospho-alpha-D-ribose 1-diphosphate: step 1/9. Its activity is regulated as follows. Feedback inhibited by histidine. In terms of biological role, catalyzes the condensation of ATP and 5-phosphoribose 1-diphosphate to form N'-(5'-phosphoribosyl)-ATP (PR-ATP). Has a crucial role in the pathway because the rate of histidine biosynthesis seems to be controlled primarily by regulation of HisG enzymatic activity. The sequence is that of ATP phosphoribosyltransferase from Salinispora tropica (strain ATCC BAA-916 / DSM 44818 / JCM 13857 / NBRC 105044 / CNB-440).